Here is a 542-residue protein sequence, read N- to C-terminus: Ribulokinase 2 (542 aa).

It belongs to the ribulokinase family.

It carries out the reaction D-ribulose + ATP = D-ribulose 5-phosphate + ADP + H(+). It catalyses the reaction L-ribulose + ATP = L-ribulose 5-phosphate + ADP + H(+). Its pathway is carbohydrate degradation; L-arabinose degradation via L-ribulose; D-xylulose 5-phosphate from L-arabinose (bacterial route): step 2/3. This chain is Ribulokinase 2, found in Staphylococcus saprophyticus subsp. saprophyticus (strain ATCC 15305 / DSM 20229 / NCIMB 8711 / NCTC 7292 / S-41).